The sequence spans 129 residues: Glycine cleavage system H protein (129 aa).

Residues 23–105 (SAVVGITEHA…YGEGWLAKFS (83 aa)) form the Lipoyl-binding domain. Lys-64 bears the N6-lipoyllysine mark.

It belongs to the GcvH family. In terms of assembly, the glycine cleavage system is composed of four proteins: P, T, L and H. Requires (R)-lipoate as cofactor.

Its function is as follows. The glycine cleavage system catalyzes the degradation of glycine. The H protein shuttles the methylamine group of glycine from the P protein to the T protein. This chain is Glycine cleavage system H protein, found in Herpetosiphon aurantiacus (strain ATCC 23779 / DSM 785 / 114-95).